A 600-amino-acid polypeptide reads, in one-letter code: NADH-quinone oxidoreductase subunit C/D (600 aa).

The tract at residues Met-1–Gln-190 is NADH dehydrogenase I subunit C. Residues Asp-214–Arg-600 form an NADH dehydrogenase I subunit D region.

It in the N-terminal section; belongs to the complex I 30 kDa subunit family. The protein in the C-terminal section; belongs to the complex I 49 kDa subunit family. NDH-1 is composed of 13 different subunits. Subunits NuoB, CD, E, F, and G constitute the peripheral sector of the complex.

The protein resides in the cell inner membrane. It catalyses the reaction a quinone + NADH + 5 H(+)(in) = a quinol + NAD(+) + 4 H(+)(out). In terms of biological role, NDH-1 shuttles electrons from NADH, via FMN and iron-sulfur (Fe-S) centers, to quinones in the respiratory chain. The immediate electron acceptor for the enzyme in this species is believed to be ubiquinone. Couples the redox reaction to proton translocation (for every two electrons transferred, four hydrogen ions are translocated across the cytoplasmic membrane), and thus conserves the redox energy in a proton gradient. The chain is NADH-quinone oxidoreductase subunit C/D from Salmonella paratyphi A (strain ATCC 9150 / SARB42).